A 693-amino-acid polypeptide reads, in one-letter code: Polyribonucleotide nucleotidyltransferase (693 aa).

The Mg(2+) site is built by Asp-489 and Asp-495. The KH domain maps to 556–615; it reads PQIHVMNINPAKIKDVVGRGGATVKGIVEKTGAQIDTSDSGEVKVFAKDKKSMDMAVAMI. An S1 motif domain is found at 625–693; the sequence is GQVYKGKIVK…GRVKLSLVAR (69 aa).

The protein belongs to the polyribonucleotide nucleotidyltransferase family. As to quaternary structure, component of the RNA degradosome, which is a multiprotein complex involved in RNA processing and mRNA degradation. It depends on Mg(2+) as a cofactor.

It localises to the cytoplasm. The catalysed reaction is RNA(n+1) + phosphate = RNA(n) + a ribonucleoside 5'-diphosphate. Functionally, involved in mRNA degradation. Catalyzes the phosphorolysis of single-stranded polyribonucleotides processively in the 3'- to 5'-direction. This is Polyribonucleotide nucleotidyltransferase from Francisella tularensis subsp. mediasiatica (strain FSC147).